Here is a 151-residue protein sequence, read N- to C-terminus: Putative pre-16S rRNA nuclease (151 aa).

It belongs to the YqgF nuclease family.

It localises to the cytoplasm. Its function is as follows. Could be a nuclease involved in processing of the 5'-end of pre-16S rRNA. The chain is Putative pre-16S rRNA nuclease from Bifidobacterium longum subsp. infantis (strain ATCC 15697 / DSM 20088 / JCM 1222 / NCTC 11817 / S12).